Consider the following 460-residue polypeptide: UDP-N-acetylmuramoylalanine--D-glutamate ligase (460 aa).

Residue 123-129 coordinates ATP; the sequence is GTNGKTT.

Belongs to the MurCDEF family.

The protein resides in the cytoplasm. It catalyses the reaction UDP-N-acetyl-alpha-D-muramoyl-L-alanine + D-glutamate + ATP = UDP-N-acetyl-alpha-D-muramoyl-L-alanyl-D-glutamate + ADP + phosphate + H(+). It participates in cell wall biogenesis; peptidoglycan biosynthesis. Functionally, cell wall formation. Catalyzes the addition of glutamate to the nucleotide precursor UDP-N-acetylmuramoyl-L-alanine (UMA). This Enterococcus hirae protein is UDP-N-acetylmuramoylalanine--D-glutamate ligase (murD).